The primary structure comprises 455 residues: MKKLLTVMTMAVLTAGTLLLPAQSVTPAAHAVQISNSERELPFKAKHAYSTISQLSEAIGPRIAGTAAEKKSALLIASSMRKLKLDVKVQRFNIPDRLEGTLSSAGRDILLQAASGSAPTEEQGLTAPLYNAGLGYQKDFTADAKGKIALISRGDLTYYEKAKNAEAAGAKAVIIYNNKESLVPMTPNLSGNKVGIPVVGIKKEDGEALTQQKEATLKLKAFTNQTSQNIIGIKKPKNIKHPDIVYVTAHYDSVPFSPGANDNGSGTSVMLEMARVLKSVPSDKEIRFIAFGAEELGLLGSSHYVDHLSEKELKRSEVNFNLDMVGTSWEKASELYVNTLDGQSNYVWESSRTAAEKIGFDSLSLTQGGSSDHVPFHEAGIDSANFIWGDPETEEVEPWYHTPEDSIEHISKERLQQAGDLVTAAVYEAVKKEKKPKTIKKQMKAKASDIFEDIK.

Residues 1–31 form the signal peptide; it reads MKKLLTVMTMAVLTAGTLLLPAQSVTPAAHA. Residues H250, D262, E295, D323, and H401 each contribute to the Zn(2+) site.

Belongs to the peptidase M28 family. M28B subfamily. As to quaternary structure, monomer. Zn(2+) serves as cofactor.

It is found in the secreted. It carries out the reaction Release of N-terminal Arg and Lys from oligopeptides when P1' is not Pro. Also acts on arylamides of Arg and Lys.. It catalyses the reaction Release of an N-terminal amino acid, preferentially leucine, but not glutamic or aspartic acids.. Its function is as follows. Catalyzes the hydrolysis of a range of N-terminal amino acids. This chain is Aminopeptidase YwaD (ywaD), found in Bacillus subtilis (strain 168).